A 429-amino-acid chain; its full sequence is 26S proteasome regulatory subunit RPN7 (429 aa).

Phosphoserine is present on residues S8 and S77. The TPR repeat unit spans residues 131 to 164 (AQAWINLGEYYAQIGDKDNAEKTLGKSLSKAIST). Residues 223-395 (NFKEAAKLLV…GIVETNRPDN (173 aa)) form the PCI domain.

The 26S proteasome is composed of a core protease, known as the 20S proteasome, capped at one or both ends by the 19S regulatory complex (RC). The RC is composed of at least 18 different subunits in two subcomplexes, the base and the lid, which form the portions proximal and distal to the 20S proteolytic core, respectively. Component of the lid subcomplex of the 19S RC.

Its subcellular location is the nucleus. Its function is as follows. Component of the 19S cap proteasome complex which acts as a regulatory subunit of the 26S proteasome, involved in the ATP-dependent degradation of ubiquitinated proteins. This Saccharomyces cerevisiae (strain ATCC 204508 / S288c) (Baker's yeast) protein is 26S proteasome regulatory subunit RPN7.